Reading from the N-terminus, the 186-residue chain is Elongation factor P (186 aa).

It belongs to the elongation factor P family.

Its subcellular location is the cytoplasm. Its pathway is protein biosynthesis; polypeptide chain elongation. Functionally, involved in peptide bond synthesis. Stimulates efficient translation and peptide-bond synthesis on native or reconstituted 70S ribosomes in vitro. Probably functions indirectly by altering the affinity of the ribosome for aminoacyl-tRNA, thus increasing their reactivity as acceptors for peptidyl transferase. The chain is Elongation factor P from Polynucleobacter asymbioticus (strain DSM 18221 / CIP 109841 / QLW-P1DMWA-1) (Polynucleobacter necessarius subsp. asymbioticus).